Consider the following 474-residue polypeptide: Ribosomal protein uS12 methylthiotransferase RimO (474 aa).

One can recognise an MTTase N-terminal domain in the interval 37 to 147 (NRIGFVSLGC…VLNHVHKYVP (111 aa)). Residues Cys-46, Cys-82, Cys-111, Cys-179, Cys-183, and Cys-186 each contribute to the [4Fe-4S] cluster site. Positions 165–402 (LTPKHYAYLK…MEVQAEISAE (238 aa)) constitute a Radical SAM core domain. The TRAM domain occupies 405 to 471 (ARLVGRELDI…EHDLWAELVA (67 aa)).

This sequence belongs to the methylthiotransferase family. RimO subfamily. [4Fe-4S] cluster is required as a cofactor.

Its subcellular location is the cytoplasm. The enzyme catalyses L-aspartate(89)-[ribosomal protein uS12]-hydrogen + (sulfur carrier)-SH + AH2 + 2 S-adenosyl-L-methionine = 3-methylsulfanyl-L-aspartate(89)-[ribosomal protein uS12]-hydrogen + (sulfur carrier)-H + 5'-deoxyadenosine + L-methionine + A + S-adenosyl-L-homocysteine + 2 H(+). In terms of biological role, catalyzes the methylthiolation of an aspartic acid residue of ribosomal protein uS12. This chain is Ribosomal protein uS12 methylthiotransferase RimO, found in Shewanella amazonensis (strain ATCC BAA-1098 / SB2B).